The chain runs to 378 residues: Signal recognition particle receptor FtsY (378 aa).

GTP-binding positions include 184-191 (GVNGTGKT), 266-270 (DTAGR), and 330-333 (TKLD).

The protein belongs to the GTP-binding SRP family. FtsY subfamily. As to quaternary structure, part of the signal recognition particle protein translocation system, which is composed of SRP and FtsY. SRP is a ribonucleoprotein composed of Ffh and a 4.5S RNA molecule.

The protein localises to the cell membrane. It localises to the cytoplasm. It catalyses the reaction GTP + H2O = GDP + phosphate + H(+). Involved in targeting and insertion of nascent membrane proteins into the cytoplasmic membrane. Acts as a receptor for the complex formed by the signal recognition particle (SRP) and the ribosome-nascent chain (RNC). Interaction with SRP-RNC leads to the transfer of the RNC complex to the Sec translocase for insertion into the membrane, the hydrolysis of GTP by both Ffh and FtsY, and the dissociation of the SRP-FtsY complex into the individual components. This Buchnera aphidicola subsp. Acyrthosiphon pisum (strain APS) (Acyrthosiphon pisum symbiotic bacterium) protein is Signal recognition particle receptor FtsY.